Consider the following 281-residue polypeptide: MLRVAVPNKGALSESAITMLTEAGYRQRRSSRELVLVDNDNGVEFFYLRPRDIAIYVGGGTLDLGITGRDLLLDSGAEAAEELCLDFARSTFRLAGPLGQFSSVQDLQGKRIATSYQVLLERHLAEQGVDAEVVRLDGAVESSIRLGVADAIADVVETGNTLRAAGLEIFDEPIMTSEALLIRRGDEPEPEGLSVLRRRLQGVLVARQYVMMDYDIREELLPAATEITPGMEGPTISPLGRDGAVAVRSMVRKADTNKVMDALYEVGARAILVSPIQAARI.

It belongs to the ATP phosphoribosyltransferase family. Long subfamily. Requires Mg(2+) as cofactor.

The protein resides in the cytoplasm. The enzyme catalyses 1-(5-phospho-beta-D-ribosyl)-ATP + diphosphate = 5-phospho-alpha-D-ribose 1-diphosphate + ATP. Its pathway is amino-acid biosynthesis; L-histidine biosynthesis; L-histidine from 5-phospho-alpha-D-ribose 1-diphosphate: step 1/9. Its activity is regulated as follows. Feedback inhibited by histidine. Catalyzes the condensation of ATP and 5-phosphoribose 1-diphosphate to form N'-(5'-phosphoribosyl)-ATP (PR-ATP). Has a crucial role in the pathway because the rate of histidine biosynthesis seems to be controlled primarily by regulation of HisG enzymatic activity. This chain is ATP phosphoribosyltransferase, found in Kocuria rhizophila (strain ATCC 9341 / DSM 348 / NBRC 103217 / DC2201).